The primary structure comprises 599 residues: Beta-(1--&gt;2)glucan export ATP-binding/permease protein NdvA (599 aa).

An ABC transmembrane type-1 domain is found at 21-311 (GWILAVANLL…VVNFINNVLM (291 aa)). A run of 6 helical transmembrane segments spans residues 22–42 (WILA…PILF), 68–88 (LLGA…LVAL), 146–166 (EHFA…YINW), 168–188 (LAIL…LVVH), 254–274 (VITR…GIYL), and 276–296 (QQGL…TLLI). The ABC transporter domain occupies 345-579 (VEFQNVSFSY…GGAFAQLARA (235 aa)). Residue 378–385 (GATGAGKS) coordinates ATP.

It belongs to the ABC transporter superfamily. Beta-(1--&gt;2)glucan exporter (TC 3.A.1.108.1) family. Homodimer.

It localises to the cell inner membrane. The enzyme catalyses [(1-&gt;2)-beta-D-glucosyl](n)(in) + ATP + H2O = [(1-&gt;2)-beta-D-glucosyl](n)(out) + ADP + phosphate + H(+). In terms of biological role, involved in beta-(1--&gt;2)glucan export. Transmembrane domains (TMD) form a pore in the inner membrane and the ATP-binding domain (NBD) is responsible for energy generation. The chain is Beta-(1--&gt;2)glucan export ATP-binding/permease protein NdvA from Rhodopseudomonas palustris (strain ATCC BAA-98 / CGA009).